We begin with the raw amino-acid sequence, 98 residues long: MSAAARHYDTILSPVITEKSTLLSEESKVVFFVPLSANKGEIAEAVEALFKVKVTAVNTIKVHGKTKRFRGIPGRRNDQKKAVVTLAEGHSIDVTTGL.

The protein belongs to the universal ribosomal protein uL23 family. Part of the 50S ribosomal subunit. Contacts protein L29, and trigger factor when it is bound to the ribosome.

Its function is as follows. One of the early assembly proteins it binds 23S rRNA. One of the proteins that surrounds the polypeptide exit tunnel on the outside of the ribosome. Forms the main docking site for trigger factor binding to the ribosome. The sequence is that of Large ribosomal subunit protein uL23 from Maricaulis maris (strain MCS10) (Caulobacter maris).